Reading from the N-terminus, the 643-residue chain is Threonine--tRNA ligase (643 aa).

The TGS domain maps to 1 to 61; the sequence is MPIITLPDGS…TEDSKLEIIT (61 aa). Residues 243–534 are catalytic; the sequence is DHRKIGKALD…ITEEYAGFFP (292 aa). Zn(2+) is bound by residues cysteine 334, histidine 385, and histidine 511.

The protein belongs to the class-II aminoacyl-tRNA synthetase family. As to quaternary structure, homodimer. Zn(2+) serves as cofactor.

It is found in the cytoplasm. The catalysed reaction is tRNA(Thr) + L-threonine + ATP = L-threonyl-tRNA(Thr) + AMP + diphosphate + H(+). Functionally, catalyzes the attachment of threonine to tRNA(Thr) in a two-step reaction: L-threonine is first activated by ATP to form Thr-AMP and then transferred to the acceptor end of tRNA(Thr). Also edits incorrectly charged L-seryl-tRNA(Thr). The sequence is that of Threonine--tRNA ligase from Pasteurella multocida (strain Pm70).